The sequence spans 133 residues: Nickel-responsive regulator (133 aa).

The Ni(2+) site is built by His76, His87, His89, and Cys95.

It belongs to the transcriptional regulatory CopG/NikR family. Homotetramer. The cofactor is Ni(2+).

In terms of biological role, transcriptional repressor of the nikABCDE operon. Is active in the presence of excessive concentrations of intracellular nickel. The sequence is that of Nickel-responsive regulator from Escherichia coli O6:K15:H31 (strain 536 / UPEC).